A 355-amino-acid polypeptide reads, in one-letter code: Capsid protein VP1/VP2 (355 aa).

The span at 1 to 21 (MADSTTMEHDGRGTKRKREAD) shows a compositional bias: basic and acidic residues. Residues 1 to 41 (MADSTTMEHDGRGTKRKREADGGSGQGVGKGNSNAVKEGYG) form a disordered region.

Belongs to the parvoviridae capsid protein family.

The protein resides in the virion. Functionally, capsid protein self-assembles to form an icosahedral capsid with a T=1 symmetry, about 22 nm in diameter, and consisting of 60 copies of size variants of the capsid proteins, which differ in the N-terminushe capsid encapsulates the genomic ssDNA. Capsid proteins are responsible for the attachment to host cell receptors. This attachment induces virion internalization predominantly through clathrin-dependent endocytosis. This is Capsid protein VP1/VP2 (VP) from Aedes albopictus densovirus (isolate Boublik/1994) (AalDNV).